The chain runs to 347 residues: Gamma-glutamyl hydrolase 2 (347 aa).

A signal peptide spans 1–22 (MWSYVWLPLVALSLFKDSIIMA). A Gamma-glutamyl hydrolase domain is found at 45–341 (APDPNLNYRP…IGYDEVYIFT (297 aa)). Cysteine 155 functions as the Nucleophile in the catalytic mechanism. Histidine 268 functions as the Proton donor in the catalytic mechanism.

The protein belongs to the peptidase C26 family. Expressed in roots, in leaves, stems and siliques.

It is found in the vacuole. Its subcellular location is the secreted. The protein localises to the extracellular space. It localises to the cell wall. It catalyses the reaction (6S)-5,6,7,8-tetrahydrofolyl-(gamma-L-Glu)(n) + (n-1) H2O = (6S)-5,6,7,8-tetrahydrofolate + (n-1) L-glutamate. Functionally, cleaves the polyglutamate sidechains of folate polyglutamates in the vacuole. Is important for polyglutamyl tail length determination before vacuolar exit. Plays a role on folate stability and intracellular folate content. Has endopeptidase activity against 4-amino-10-methylpteroyl penta-, tetra-, tri- and di-gamma-L-glutamate substrates and is responsible for the production of folic acid, also called pteroylglutamic acid (PteGlu) from teroylpolyglutamates. The protein is Gamma-glutamyl hydrolase 2 (GGH2) of Arabidopsis thaliana (Mouse-ear cress).